The primary structure comprises 541 residues: Glucose-6-phosphate isomerase (541 aa).

Catalysis depends on Glu346, which acts as the Proton donor. Active-site residues include His377 and Lys506.

This sequence belongs to the GPI family.

It localises to the cytoplasm. The catalysed reaction is alpha-D-glucose 6-phosphate = beta-D-fructose 6-phosphate. It participates in carbohydrate biosynthesis; gluconeogenesis. Its pathway is carbohydrate degradation; glycolysis; D-glyceraldehyde 3-phosphate and glycerone phosphate from D-glucose: step 2/4. Catalyzes the reversible isomerization of glucose-6-phosphate to fructose-6-phosphate. The sequence is that of Glucose-6-phosphate isomerase from Rhizobium etli (strain CIAT 652).